Consider the following 553-residue polypeptide: Glycerol-3-phosphate dehydrogenase (553 aa).

An FAD-binding site is contributed by Asp13–Glu41.

This sequence belongs to the FAD-dependent glycerol-3-phosphate dehydrogenase family. Requires FAD as cofactor.

It is found in the cytoplasm. The catalysed reaction is a quinone + sn-glycerol 3-phosphate = dihydroxyacetone phosphate + a quinol. The sequence is that of Glycerol-3-phosphate dehydrogenase (glpD) from Synechocystis sp. (strain ATCC 27184 / PCC 6803 / Kazusa).